A 205-amino-acid polypeptide reads, in one-letter code: CMRF35-like molecule 2 (205 aa).

An N-terminal signal peptide occupies residues 1-17 (MWLLPALLLLCLSGCLS). The Ig-like V-type domain occupies 18–120 (LKGPGSVTGT…VLDSWSRDPS (103 aa)). Over 18–173 (LKGPGSVTGT…NSGFRLSSPH (156 aa)) the chain is Extracellular. C36 and C104 are oxidised to a cystine. Residue N154 is glycosylated (N-linked (GlcNAc...) asparagine). Residues 174–194 (FLLVVLLKLPLLLSMLGAVFW) traverse the membrane as a helical segment. Residues 195–205 (VNRPQWAPPGR) are Cytoplasmic-facing.

Belongs to the CD300 family. Interacts with TYROBP. N-glycosylated. As to expression, present on the surface of mature hematopoietic cells of the monocyte and myeloid lineages (at protein level).

It is found in the cell membrane. Probably acts as an activating receptor. The chain is CMRF35-like molecule 2 (CD300E) from Homo sapiens (Human).